Here is a 75-residue protein sequence, read N- to C-terminus: ATP synthase subunit c (75 aa).

A run of 2 helical transmembrane segments spans residues 8 to 28 (FIAI…IANI) and 52 to 72 (IGAA…MLLI).

Belongs to the ATPase C chain family. As to quaternary structure, F-type ATPases have 2 components, F(1) - the catalytic core - and F(0) - the membrane proton channel. F(1) has five subunits: alpha(3), beta(3), gamma(1), delta(1), epsilon(1). F(0) has three main subunits: a(1), b(2) and c(10-14). The alpha and beta chains form an alternating ring which encloses part of the gamma chain. F(1) is attached to F(0) by a central stalk formed by the gamma and epsilon chains, while a peripheral stalk is formed by the delta and b chains.

The protein resides in the cell membrane. F(1)F(0) ATP synthase produces ATP from ADP in the presence of a proton or sodium gradient. F-type ATPases consist of two structural domains, F(1) containing the extramembraneous catalytic core and F(0) containing the membrane proton channel, linked together by a central stalk and a peripheral stalk. During catalysis, ATP synthesis in the catalytic domain of F(1) is coupled via a rotary mechanism of the central stalk subunits to proton translocation. Its function is as follows. Key component of the F(0) channel; it plays a direct role in translocation across the membrane. A homomeric c-ring of between 10-14 subunits forms the central stalk rotor element with the F(1) delta and epsilon subunits. The protein is ATP synthase subunit c of Wolbachia pipientis wMel.